A 296-amino-acid chain; its full sequence is Formamidopyrimidine-DNA glycosylase (296 aa).

The active-site Schiff-base intermediate with DNA is the P2. The active-site Proton donor is the E3. The active-site Proton donor; for beta-elimination activity is the K58. The DNA site is built by H106, R125, and K167. An FPG-type zinc finger spans residues R258–P294. The active-site Proton donor; for delta-elimination activity is the R284.

It belongs to the FPG family. In terms of assembly, monomer. Zn(2+) serves as cofactor.

The enzyme catalyses Hydrolysis of DNA containing ring-opened 7-methylguanine residues, releasing 2,6-diamino-4-hydroxy-5-(N-methyl)formamidopyrimidine.. It catalyses the reaction 2'-deoxyribonucleotide-(2'-deoxyribose 5'-phosphate)-2'-deoxyribonucleotide-DNA = a 3'-end 2'-deoxyribonucleotide-(2,3-dehydro-2,3-deoxyribose 5'-phosphate)-DNA + a 5'-end 5'-phospho-2'-deoxyribonucleoside-DNA + H(+). Its function is as follows. Involved in base excision repair of DNA damaged by oxidation or by mutagenic agents. Acts as a DNA glycosylase that recognizes and removes damaged bases. Has a preference for oxidized purines, such as 7,8-dihydro-8-oxoguanine (8-oxoG). Has AP (apurinic/apyrimidinic) lyase activity and introduces nicks in the DNA strand. Cleaves the DNA backbone by beta-delta elimination to generate a single-strand break at the site of the removed base with both 3'- and 5'-phosphates. The protein is Formamidopyrimidine-DNA glycosylase of Methylobacterium radiotolerans (strain ATCC 27329 / DSM 1819 / JCM 2831 / NBRC 15690 / NCIMB 10815 / 0-1).